We begin with the raw amino-acid sequence, 246 residues long: Dihydroorotate dehydrogenase B (NAD(+)), electron transfer subunit (246 aa).

The region spanning Met-3–Ile-95 is the FAD-binding FR-type domain. Residues Arg-48 to Ser-51 and Gly-70 to Thr-71 contribute to the FAD site. Positions 213, 218, 221, and 233 each coordinate [2Fe-2S] cluster.

It belongs to the PyrK family. Heterotetramer of 2 PyrK and 2 PyrD type B subunits. Requires [2Fe-2S] cluster as cofactor. It depends on FAD as a cofactor.

Its pathway is pyrimidine metabolism; UMP biosynthesis via de novo pathway; orotate from (S)-dihydroorotate (NAD(+) route): step 1/1. Functionally, responsible for channeling the electrons from the oxidation of dihydroorotate from the FMN redox center in the PyrD type B subunit to the ultimate electron acceptor NAD(+). The polypeptide is Dihydroorotate dehydrogenase B (NAD(+)), electron transfer subunit (Clostridium perfringens (strain 13 / Type A)).